Consider the following 153-residue polypeptide: 3-hydroxyacyl-[acyl-carrier-protein] dehydratase FabZ (153 aa).

Residue His-54 is part of the active site.

This sequence belongs to the thioester dehydratase family. FabZ subfamily.

It is found in the cytoplasm. It carries out the reaction a (3R)-hydroxyacyl-[ACP] = a (2E)-enoyl-[ACP] + H2O. In terms of biological role, involved in unsaturated fatty acids biosynthesis. Catalyzes the dehydration of short chain beta-hydroxyacyl-ACPs and long chain saturated and unsaturated beta-hydroxyacyl-ACPs. This Shewanella sediminis (strain HAW-EB3) protein is 3-hydroxyacyl-[acyl-carrier-protein] dehydratase FabZ.